The sequence spans 83 residues: Putative defensin-like protein 131 (83 aa).

The signal sequence occupies residues 1 to 34; it reads MAKNRVLTIFYCTIYYCICFKYVLLGMVVEKTQG. 4 disulfides stabilise this stretch: Cys-37–Cys-83, Cys-46–Cys-65, Cys-51–Cys-77, and Cys-55–Cys-79.

The protein belongs to the DEFL family.

It localises to the secreted. This chain is Putative defensin-like protein 131 (LCR29), found in Arabidopsis thaliana (Mouse-ear cress).